A 290-amino-acid chain; its full sequence is Bifunctional protein FolD (290 aa).

NADP(+)-binding positions include 167–169 (GRS), S192, and I233.

It belongs to the tetrahydrofolate dehydrogenase/cyclohydrolase family. As to quaternary structure, homodimer.

The catalysed reaction is (6R)-5,10-methylene-5,6,7,8-tetrahydrofolate + NADP(+) = (6R)-5,10-methenyltetrahydrofolate + NADPH. It catalyses the reaction (6R)-5,10-methenyltetrahydrofolate + H2O = (6R)-10-formyltetrahydrofolate + H(+). Its pathway is one-carbon metabolism; tetrahydrofolate interconversion. Functionally, catalyzes the oxidation of 5,10-methylenetetrahydrofolate to 5,10-methenyltetrahydrofolate and then the hydrolysis of 5,10-methenyltetrahydrofolate to 10-formyltetrahydrofolate. The protein is Bifunctional protein FolD of Gloeobacter violaceus (strain ATCC 29082 / PCC 7421).